The primary structure comprises 408 residues: Protein BTN1 (408 aa).

Residues 1 to 30 form the signal peptide; it reads MSDKSHQIYCYFWLFGLINNVLYVVILSAA. Helical transmembrane passes span 42–62, 80–100, 128–148, 150–170, 238–258, 323–343, and 369–389; these read LVLLADIFPSLAIKLCSPFFI, LGMFLVSFKNLFVCLLGISFA, SGTGGAGIIGGASYMFLTSIF, VPVKLTLLVFSLLPFAFLFYF, TVYLFEYLINQAVAPTLLFPI, WFYVTHSPWAVMILIFYEGFL, and GAVSIADSFGVFLAALLGLGL.

It belongs to the battenin family.

It is found in the vacuole membrane. Plays a role in vacuolar arginine transport. Involved in pH homeostasis. May be involved in ion homeostasis together with IST2. Not necessary for mitochondrial function or ATP synthase degradation. This Saccharomyces cerevisiae (strain ATCC 204508 / S288c) (Baker's yeast) protein is Protein BTN1 (YHC3).